A 678-amino-acid chain; its full sequence is DNA ligase (678 aa).

NAD(+) is bound by residues 47-51 (DSDYD), 96-97 (SL), and Glu122. Residue Lys124 is the N6-AMP-lysine intermediate of the active site. Arg145, Glu182, Lys300, and Lys324 together coordinate NAD(+). 4 residues coordinate Zn(2+): Cys418, Cys421, Cys436, and Cys442. The BRCT domain occupies 602-678 (AYNESFTGKT…ILEDNLKDLL (77 aa)).

Belongs to the NAD-dependent DNA ligase family. LigA subfamily. Requires Mg(2+) as cofactor. Mn(2+) is required as a cofactor.

It carries out the reaction NAD(+) + (deoxyribonucleotide)n-3'-hydroxyl + 5'-phospho-(deoxyribonucleotide)m = (deoxyribonucleotide)n+m + AMP + beta-nicotinamide D-nucleotide.. Its function is as follows. DNA ligase that catalyzes the formation of phosphodiester linkages between 5'-phosphoryl and 3'-hydroxyl groups in double-stranded DNA using NAD as a coenzyme and as the energy source for the reaction. It is essential for DNA replication and repair of damaged DNA. The polypeptide is DNA ligase (Francisella tularensis subsp. holarctica (strain LVS)).